Consider the following 73-residue polypeptide: Sec-independent protein translocase protein TatA (73 aa).

A helical membrane pass occupies residues 1-21; sequence MGSFSIWHWLIVLVIVMLVFG. Residues 44-73 form a disordered region; it reads KSAEDPNEQIPQSTTTAEKTVDVQAKDINK. The span at 52 to 61 shows a compositional bias: polar residues; the sequence is QIPQSTTTAE. Positions 62 to 73 are enriched in basic and acidic residues; it reads KTVDVQAKDINK.

This sequence belongs to the TatA/E family. The Tat system comprises two distinct complexes: a TatABC complex, containing multiple copies of TatA, TatB and TatC subunits, and a separate TatA complex, containing only TatA subunits. Substrates initially bind to the TatABC complex, which probably triggers association of the separate TatA complex to form the active translocon.

The protein localises to the cell inner membrane. Part of the twin-arginine translocation (Tat) system that transports large folded proteins containing a characteristic twin-arginine motif in their signal peptide across membranes. TatA could form the protein-conducting channel of the Tat system. This is Sec-independent protein translocase protein TatA from Polynucleobacter asymbioticus (strain DSM 18221 / CIP 109841 / QLW-P1DMWA-1) (Polynucleobacter necessarius subsp. asymbioticus).